A 385-amino-acid chain; its full sequence is 1-deoxy-D-xylulose 5-phosphate reductoisomerase (385 aa).

NADPH is bound by residues Thr-11, Gly-12, Ser-13, Ile-14, Gln-39, and Asn-117. Lys-118 provides a ligand contact to 1-deoxy-D-xylulose 5-phosphate. Glu-119 contributes to the NADPH binding site. Residue Asp-143 participates in Mn(2+) binding. Residues Ser-144, Glu-145, Ser-170, and His-193 each coordinate 1-deoxy-D-xylulose 5-phosphate. Glu-145 provides a ligand contact to Mn(2+). Residue Gly-199 coordinates NADPH. The 1-deoxy-D-xylulose 5-phosphate site is built by Ser-206, Asn-211, Lys-212, and Glu-215. Glu-215 is a binding site for Mn(2+).

Belongs to the DXR family. Mg(2+) is required as a cofactor. Mn(2+) serves as cofactor.

It carries out the reaction 2-C-methyl-D-erythritol 4-phosphate + NADP(+) = 1-deoxy-D-xylulose 5-phosphate + NADPH + H(+). Its pathway is isoprenoid biosynthesis; isopentenyl diphosphate biosynthesis via DXP pathway; isopentenyl diphosphate from 1-deoxy-D-xylulose 5-phosphate: step 1/6. In terms of biological role, catalyzes the NADPH-dependent rearrangement and reduction of 1-deoxy-D-xylulose-5-phosphate (DXP) to 2-C-methyl-D-erythritol 4-phosphate (MEP). This is 1-deoxy-D-xylulose 5-phosphate reductoisomerase from Thermomicrobium roseum (strain ATCC 27502 / DSM 5159 / P-2).